Reading from the N-terminus, the 487-residue chain is Kynureninase 1 (487 aa).

Pyridoxal 5'-phosphate contacts are provided by residues Leu149, Thr150, 177–180 (FPSD), Ser234, Asp263, His266, and Tyr288. An N6-(pyridoxal phosphate)lysine modification is found at Lys289. Residues Trp329 and Asn357 each coordinate pyridoxal 5'-phosphate.

This sequence belongs to the kynureninase family. Homodimer. Pyridoxal 5'-phosphate is required as a cofactor.

It localises to the cytoplasm. The catalysed reaction is L-kynurenine + H2O = anthranilate + L-alanine + H(+). It carries out the reaction 3-hydroxy-L-kynurenine + H2O = 3-hydroxyanthranilate + L-alanine + H(+). It functions in the pathway amino-acid degradation; L-kynurenine degradation; L-alanine and anthranilate from L-kynurenine: step 1/1. It participates in cofactor biosynthesis; NAD(+) biosynthesis; quinolinate from L-kynurenine: step 2/3. Its function is as follows. Catalyzes the cleavage of L-kynurenine (L-Kyn) and L-3-hydroxykynurenine (L-3OHKyn) into anthranilic acid (AA) and 3-hydroxyanthranilic acid (3-OHAA), respectively. The protein is Kynureninase 1 (bna5-1) of Emericella nidulans (strain FGSC A4 / ATCC 38163 / CBS 112.46 / NRRL 194 / M139) (Aspergillus nidulans).